Here is a 937-residue protein sequence, read N- to C-terminus: Isoleucine--tRNA ligase (937 aa).

Residues 58–68 (PYANGNIHIGH) carry the 'HIGH' region motif. Position 560 (Glu560) interacts with L-isoleucyl-5'-AMP. The short motif at 601–605 (KMSKS) is the 'KMSKS' region element. An ATP-binding site is contributed by Lys604. Zn(2+) contacts are provided by Cys900, Cys903, Cys920, and Cys923.

It belongs to the class-I aminoacyl-tRNA synthetase family. IleS type 1 subfamily. Monomer. It depends on Zn(2+) as a cofactor.

It is found in the cytoplasm. The catalysed reaction is tRNA(Ile) + L-isoleucine + ATP = L-isoleucyl-tRNA(Ile) + AMP + diphosphate. Catalyzes the attachment of isoleucine to tRNA(Ile). As IleRS can inadvertently accommodate and process structurally similar amino acids such as valine, to avoid such errors it has two additional distinct tRNA(Ile)-dependent editing activities. One activity is designated as 'pretransfer' editing and involves the hydrolysis of activated Val-AMP. The other activity is designated 'posttransfer' editing and involves deacylation of mischarged Val-tRNA(Ile). The protein is Isoleucine--tRNA ligase of Thioalkalivibrio sulfidiphilus (strain HL-EbGR7).